Here is a 270-residue protein sequence, read N- to C-terminus: Metallo-beta-lactamase type 2 (270 aa).

The first 28 residues, 1-28 (MELPNIMHPVAKLSTALAAALMLSGCMP), serve as a signal peptide directing secretion. Positions 120, 122, 124, 189, and 208 each coordinate Zn(2+). Substrate-binding residues include Lys-211 and Asn-220. His-250 serves as a coordination point for Zn(2+).

The protein belongs to the metallo-beta-lactamase superfamily. Class-B beta-lactamase family. In terms of assembly, monomer. Zn(2+) is required as a cofactor.

It is found in the periplasm. It carries out the reaction a beta-lactam + H2O = a substituted beta-amino acid. Its activity is regulated as follows. Inhibits by captopril, thiorphan, dimercaprol and tiopronin. This enzyme is not susceptible to inactivation by the beta-lactamase-blocking agents clavulanic acid. Confers resistance to the different beta-lactams antibiotics (penicillin, cephalosporin and carbapenem) via the hydrolysis of the beta-lactam ring. Does not confer resistance to the polymixin colistin or the fluoroquinolone ciprofloxacin. This Klebsiella pneumoniae protein is Metallo-beta-lactamase type 2.